Here is a 330-residue protein sequence, read N- to C-terminus: GMP reductase (330 aa).

Catalysis depends on cysteine 180, which acts as the Thioimidate intermediate. 209-232 (LIADGGIRHNGDIAKSVRFGASMV) contributes to the NADP(+) binding site.

Belongs to the IMPDH/GMPR family. GuaC type 2 subfamily.

The enzyme catalyses IMP + NH4(+) + NADP(+) = GMP + NADPH + 2 H(+). Functionally, catalyzes the irreversible NADPH-dependent deamination of GMP to IMP. It functions in the conversion of nucleobase, nucleoside and nucleotide derivatives of G to A nucleotides, and in maintaining the intracellular balance of A and G nucleotides. The protein is GMP reductase of Lactobacillus delbrueckii subsp. bulgaricus (strain ATCC 11842 / DSM 20081 / BCRC 10696 / JCM 1002 / NBRC 13953 / NCIMB 11778 / NCTC 12712 / WDCM 00102 / Lb 14).